The following is a 345-amino-acid chain: Tropomodulin-4 (345 aa).

Residues 42 to 63 are disordered; that stretch reads NMLLPAGLRQRDQTKKSPTGPL.

The protein belongs to the tropomodulin family. In terms of assembly, binds to the N-terminus of tropomyosin and to actin. In terms of tissue distribution, highly expressed in skeletal muscle.

It is found in the cytoplasm. Its subcellular location is the cytoskeleton. Blocks the elongation and depolymerization of the actin filaments at the pointed end. The Tmod/TM complex contributes to the formation of the short actin protofilament, which in turn defines the geometry of the membrane skeleton. This is Tropomodulin-4 (TMOD4) from Homo sapiens (Human).